An 80-amino-acid polypeptide reads, in one-letter code: NADH-ubiquinone oxidoreductase chain 5 (80 aa).

2 helical membrane passes run 4-24 (ISFL…LNFM) and 44-64 (IVMT…VLLI).

The protein belongs to the complex I subunit 5 family.

It is found in the mitochondrion inner membrane. It carries out the reaction a ubiquinone + NADH + 5 H(+)(in) = a ubiquinol + NAD(+) + 4 H(+)(out). Its function is as follows. Core subunit of the mitochondrial membrane respiratory chain NADH dehydrogenase (Complex I) that is believed to belong to the minimal assembly required for catalysis. Complex I functions in the transfer of electrons from NADH to the respiratory chain. The immediate electron acceptor for the enzyme is believed to be ubiquinone. This is NADH-ubiquinone oxidoreductase chain 5 (ND5) from Ceratitis capitata (Mediterranean fruit fly).